The sequence spans 552 residues: Urocanate hydratase (552 aa).

NAD(+) is bound by residues 49-50, Gln127, 173-175, Asp193, 239-240, 260-264, 270-271, and Tyr319; these read GG, GMG, NA, QTSAH, and YI. Residue Cys407 is part of the active site. Position 489 (Gly489) interacts with NAD(+).

The protein belongs to the urocanase family. NAD(+) is required as a cofactor.

The protein localises to the cytoplasm. It carries out the reaction 4-imidazolone-5-propanoate = trans-urocanate + H2O. The protein operates within amino-acid degradation; L-histidine degradation into L-glutamate; N-formimidoyl-L-glutamate from L-histidine: step 2/3. Its function is as follows. Catalyzes the conversion of urocanate to 4-imidazolone-5-propionate. The polypeptide is Urocanate hydratase (Bacillus cereus (strain 03BB102)).